Reading from the N-terminus, the 1030-residue chain is Eukaryotic translation initiation factor 3 subunit A (1030 aa).

The stretch at 94–126 (FKEIITPIEQKVDELKEKIEKENQENPLVEQNE) forms a coiled coil. The region spanning 308–483 (SQLYSSVLLV…GVIRFGHYDF (176 aa)) is the PCI domain. Coiled-coil stretches lie at residues 527 to 620 (INSL…KAKI) and 720 to 772 (IQQE…RKNA). Basic and acidic residues-rich tracts occupy residues 576-591 (RDQQRLKEDMERREKE), 743-771 (EKARKEEQERERLEQEHLEQERLEEERKN), 800-931 (RGGD…RRDG), 939-985 (GRRD…RRDG), and 1003-1019 (DSWRSDNKKEENKKDAD). Disordered stretches follow at residues 576–603 (RDQQRLKEDMERREKEQAEEESQQNQLD) and 737–1030 (RIAA…KKRY).

This sequence belongs to the eIF-3 subunit A family. In terms of assembly, component of the eukaryotic translation initiation factor 3 (eIF-3) complex.

The protein localises to the cytoplasm. Its function is as follows. RNA-binding component of the eukaryotic translation initiation factor 3 (eIF-3) complex, which is involved in protein synthesis of a specialized repertoire of mRNAs and, together with other initiation factors, stimulates binding of mRNA and methionyl-tRNAi to the 40S ribosome. The eIF-3 complex specifically targets and initiates translation of a subset of mRNAs involved in cell proliferation. The chain is Eukaryotic translation initiation factor 3 subunit A (eif3A) from Dictyostelium discoideum (Social amoeba).